A 149-amino-acid polypeptide reads, in one-letter code: D-aminoacyl-tRNA deacylase (149 aa).

The Gly-cisPro motif, important for rejection of L-amino acids signature appears at 139–140 (GP).

This sequence belongs to the DTD family. In terms of assembly, homodimer.

It is found in the cytoplasm. The enzyme catalyses glycyl-tRNA(Ala) + H2O = tRNA(Ala) + glycine + H(+). It catalyses the reaction a D-aminoacyl-tRNA + H2O = a tRNA + a D-alpha-amino acid + H(+). In terms of biological role, an aminoacyl-tRNA editing enzyme that deacylates mischarged D-aminoacyl-tRNAs. Also deacylates mischarged glycyl-tRNA(Ala), protecting cells against glycine mischarging by AlaRS. Acts via tRNA-based rather than protein-based catalysis; rejects L-amino acids rather than detecting D-amino acids in the active site. By recycling D-aminoacyl-tRNA to D-amino acids and free tRNA molecules, this enzyme counteracts the toxicity associated with the formation of D-aminoacyl-tRNA entities in vivo and helps enforce protein L-homochirality. This Schizosaccharomyces pombe (strain 972 / ATCC 24843) (Fission yeast) protein is D-aminoacyl-tRNA deacylase (dtd1).